Reading from the N-terminus, the 252-residue chain is Mediator of RNA polymerase II transcription subunit 4 (252 aa).

Coiled coils occupy residues 5-31 (KKSTKERLESLLDDLEVLSREVIETLA) and 70-112 (KTHQ…QAKE). Residues 213-252 (MLPPNHSNEFLMESLGPNKENEEDVEVMSTDSSSSSSDSD) form a disordered region. Positions 241–252 (STDSSSSSSDSD) are enriched in low complexity.

This sequence belongs to the Mediator complex subunit 4 family. As to quaternary structure, component of the Mediator complex.

It is found in the nucleus. In terms of biological role, component of the Mediator complex, a coactivator involved in the regulated transcription of nearly all RNA polymerase II-dependent genes. Mediator functions as a bridge to convey information from gene-specific regulatory proteins to the basal RNA polymerase II transcription machinery. Mediator is recruited to promoters by direct interactions with regulatory proteins and serves as a scaffold for the assembly of a functional preinitiation complex with RNA polymerase II and the general transcription factors. The polypeptide is Mediator of RNA polymerase II transcription subunit 4 (med4) (Xenopus laevis (African clawed frog)).